The primary structure comprises 713 residues: Elongation factor G (713 aa).

The tr-type G domain occupies 8–290 (ERYRNFGIMA…GVIQLLPSPV (283 aa)). GTP contacts are provided by residues 17 to 24 (AHIDAGKT), 88 to 92 (DTPGH), and 142 to 145 (NKMD).

This sequence belongs to the TRAFAC class translation factor GTPase superfamily. Classic translation factor GTPase family. EF-G/EF-2 subfamily.

It localises to the cytoplasm. Its function is as follows. Catalyzes the GTP-dependent ribosomal translocation step during translation elongation. During this step, the ribosome changes from the pre-translocational (PRE) to the post-translocational (POST) state as the newly formed A-site-bound peptidyl-tRNA and P-site-bound deacylated tRNA move to the P and E sites, respectively. Catalyzes the coordinated movement of the two tRNA molecules, the mRNA and conformational changes in the ribosome. The chain is Elongation factor G from Stenotrophomonas maltophilia (strain K279a).